We begin with the raw amino-acid sequence, 279 residues long: Glycerol uptake facilitator protein (279 aa).

Topologically, residues 1–8 (MTTAAPTP) are cytoplasmic. Residues 9–37 (SLFGQCLAEFLGTALLIFFGTGCVAALKV) traverse the membrane as a helical segment. Residues 38-42 (AGASF) are Periplasmic-facing. The helical transmembrane segment at 43-63 (GLWEISIIWGVGVSMAIYLSA) threads the bilayer. Residues 64–66 (GVS) are Cytoplasmic-facing. The stretch at 67–70 (GAHL) is an intramembrane region. The short motif at 71–73 (NPA) is the NPA 1 element. The segment at residues 71–81 (NPAVSIALWLF) is an intramembrane region (helical). The Cytoplasmic portion of the chain corresponds to 82-87 (AGFEGR). A helical transmembrane segment spans residues 88 to 111 (KLPFYITAQVAGAFCAAALVYTLY). The Periplasmic portion of the chain corresponds to 112-146 (SSLFIEFEQAQNIVRGSQDSLALASVFSTYPHPAL). The chain crosses the membrane as a helical span at residues 147-172 (SVGQAFLVEVVITAILMAVIMALTDD). The Cytoplasmic segment spans residues 173-180 (GNGLPRGP). A helical transmembrane segment spans residues 181-197 (LAPLLIGLLIAVIGSAM). Residues 198–201 (GPLT) are Periplasmic-facing. The stretch at 202 to 205 (GFAM) is an intramembrane region. An NPA 2 motif is present at residues 206–208 (NPA). The segment at residues 206–219 (NPARDFGPKLMTYL) is an intramembrane region (helical). Topologically, residues 220–234 (AGWGPIAFTGGREIP) are periplasmic. The chain crosses the membrane as a helical span at residues 235-257 (YFLVPIFAPILGACLGAGGYRVL). At 258 to 279 (IARHLPSAAAPAEAEPEKVRAS) the chain is on the cytoplasmic side.

The protein belongs to the MIP/aquaporin (TC 1.A.8) family.

The protein resides in the cell inner membrane. The catalysed reaction is glycerol(in) = glycerol(out). Mediates glycerol diffusion across the cytoplasmic membrane via a pore-type mechanism. The chain is Glycerol uptake facilitator protein (glpF) from Pseudomonas aeruginosa (strain ATCC 15692 / DSM 22644 / CIP 104116 / JCM 14847 / LMG 12228 / 1C / PRS 101 / PAO1).